A 215-amino-acid polypeptide reads, in one-letter code: Ribonuclease (215 aa).

The N-terminal stretch at Met-1–Ala-22 is a signal peptide. Catalysis depends on residues His-62, Glu-102, and His-106. A disordered region spans residues Lys-144–Gly-166.

It belongs to the RNase T2 family.

Its subcellular location is the periplasm. The protein resides in the cytoplasm. In terms of biological role, one of the few RNases that cleave the phosphodiester bond between any two nucleotide. Shows a preference for adenylic acid. The polypeptide is Ribonuclease (Aeromonas hydrophila).